The primary structure comprises 312 residues: MACAAVMIPGLLRCSVGAIRIEAASLRLTLSTLRHLTLTSIMKSKRKTDHMERTASVLRREIVSAAKVCGAASESPSVKSLRLLVADQDFSFKAGQWVDFFIPGVSVVGGFSICSSPRLLEQERVIELAVKYTNHPPALWVHNTCTLDCEVAVRVGGEFFFDPQPADASRNLVLIAGGVGINPLLSILRHAADLLREQANKRNGYEIGTIKLFYSAKNTSELLFKKNILDLVNEFPEKIACSLHVTKQTTQINAELKPYITEGRITEKEIRDHISKETLFYICGPPPMTDFFSKQLENNHVPKEHICFEKWW.

A signal peptide spans 1–17 (MACAAVMIPGLLRCSVG). The region spanning 50 to 186 (HMERTASVLR…GGVGINPLLS (137 aa)) is the FAD-binding FR-type domain. NAD(+) is bound at residue 178 to 183 (GVGINP).

The protein is Oxidoreductase NAD-binding domain-containing protein 1 (OXNAD1) of Homo sapiens (Human).